Reading from the N-terminus, the 209-residue chain is Octanoyltransferase (209 aa).

One can recognise a BPL/LPL catalytic domain in the interval 30 to 209 (DNEPEIVYLV…IQTEFNKIFK (180 aa)). Residues 69 to 76 (RGGKFTFH), 143 to 145 (AIG), and 156 to 158 (GIA) each bind substrate. The active-site Acyl-thioester intermediate is the C174.

This sequence belongs to the LipB family.

It is found in the cytoplasm. It carries out the reaction octanoyl-[ACP] + L-lysyl-[protein] = N(6)-octanoyl-L-lysyl-[protein] + holo-[ACP] + H(+). The protein operates within protein modification; protein lipoylation via endogenous pathway; protein N(6)-(lipoyl)lysine from octanoyl-[acyl-carrier-protein]: step 1/2. Catalyzes the transfer of endogenously produced octanoic acid from octanoyl-acyl-carrier-protein onto the lipoyl domains of lipoate-dependent enzymes. Lipoyl-ACP can also act as a substrate although octanoyl-ACP is likely to be the physiological substrate. The sequence is that of Octanoyltransferase from Rickettsia prowazekii (strain Madrid E).